Reading from the N-terminus, the 846-residue chain is Penicillin G acylase (846 aa).

Residues 1–26 (MKNRNRMIVNCVTASLMYYWSLPALA) form the signal peptide. Glutamate 178 is a Ca(2+) binding site. Residues 236–289 (ALLPRYDLPAPMLDRPAKGADGALLALTAGKNRETIAAQFAQGGANGLAGYPTT) constitute a propeptide, spacer peptide. The active-site Nucleophile is the serine 290. Residues aspartate 362, valine 364, aspartate 365, proline 494, and aspartate 541 each coordinate Ca(2+).

The protein belongs to the peptidase S45 family. In terms of assembly, heterodimer of an alpha subunit and a beta subunit processed from the same precursor. It depends on Ca(2+) as a cofactor.

The protein resides in the periplasm. The enzyme catalyses a penicillin + H2O = 6-aminopenicillanate + a carboxylate. The protein is Penicillin G acylase (pac) of Escherichia coli.